The following is a 270-amino-acid chain: HTH-type transcriptional activator AllS (270 aa).

The HTH lysR-type domain occupies 4 to 61 (LDPETLRTFVSVAETGSFSRAAEKLYKTTATISYRIKLLEDNTGVALFSRTTRSVLLT). Positions 21–40 (FSRAAEKLYKTTATISYRIK) form a DNA-binding region, H-T-H motif.

Belongs to the LysR transcriptional regulatory family.

Its function is as follows. Positive regulator essential for the expression of allD operon. Binds to the allD promoter. This chain is HTH-type transcriptional activator AllS (allS), found in Klebsiella pneumoniae.